Here is a 431-residue protein sequence, read N- to C-terminus: ORC1-type DNA replication protein 14 (431 aa).

Residues threonine 62–leucine 66, tyrosine 219, and arginine 231 contribute to the ATP site.

The protein belongs to the CDC6/cdc18 family.

Its function is as follows. Involved in regulation of DNA replication. In Haloarcula marismortui (strain ATCC 43049 / DSM 3752 / JCM 8966 / VKM B-1809) (Halobacterium marismortui), this protein is ORC1-type DNA replication protein 14 (cdc6n).